A 174-amino-acid polypeptide reads, in one-letter code: uncharacterized protein (174 aa).

This sequence to E.coli HemX C-terminal region.

This is an uncharacterized protein from Haemophilus influenzae (strain ATCC 51907 / DSM 11121 / KW20 / Rd).